A 32-amino-acid chain; its full sequence is Photosystem I reaction center subunit XII (32 aa).

The helical transmembrane segment at isoleucine 4 to leucine 26 threads the bilayer.

The protein belongs to the PsaM family.

Its subcellular location is the plastid. It is found in the chloroplast thylakoid membrane. The protein is Photosystem I reaction center subunit XII of Marchantia polymorpha (Common liverwort).